The following is a 394-amino-acid chain: Elongation factor Tu 1 (394 aa).

The region spanning 10–204 is the tr-type G domain; the sequence is KPHVNVGTIG…FLDSYIPEPE (195 aa). The interval 19–26 is G1; the sequence is GHVDHGKT. 19-26 is a GTP binding site; sequence GHVDHGKT. T26 lines the Mg(2+) pocket. The G2 stretch occupies residues 60–64; that stretch reads GITIN. The segment at 81–84 is G3; it reads DCPG. Residues 81–85 and 136–139 contribute to the GTP site; these read DCPGH and NKCD. The G4 stretch occupies residues 136–139; sequence NKCD. A G5 region spans residues 174–176; it reads SAL.

It belongs to the TRAFAC class translation factor GTPase superfamily. Classic translation factor GTPase family. EF-Tu/EF-1A subfamily. As to quaternary structure, monomer.

It is found in the cytoplasm. The catalysed reaction is GTP + H2O = GDP + phosphate + H(+). In terms of biological role, GTP hydrolase that promotes the GTP-dependent binding of aminoacyl-tRNA to the A-site of ribosomes during protein biosynthesis. The protein is Elongation factor Tu 1 of Shigella sonnei (strain Ss046).